A 429-amino-acid chain; its full sequence is Stromal membrane-associated protein 2 (429 aa).

One can recognise an Arf-GAP domain in the interval 13–137; sequence QAVLANLLLE…LDINAFRKEK (125 aa). The C4-type zinc finger occupies 28–51; it reads CADCQSKGPRWASWNIGVFICIRC. Ser-127 is subject to Phosphoserine. Residues 138-172 are compositionally biased toward basic and acidic residues; that stretch reads DNKWKRGSEPAPEKKMEPVVFEKVKMPQKKEDPQL. 2 disordered regions span residues 138 to 181 and 217 to 263; these read DNKW…PKSK and VSSP…KKQL. The interaction with clathrin heavy chains stretch occupies residues 163 to 232; it reads MPQKKEDPQL…SVSRKVVGSM (70 aa). Positions 217–231 are enriched in low complexity; sequence VSSPSSSVSRKVVGS. A phosphoserine mark is found at Ser-219, Ser-223, Ser-225, Ser-231, and Ser-240. A compositionally biased stretch (basic and acidic residues) spans 253-263; that stretch reads SKSEETSKKQL. The tract at residues 340–429 is interaction with PICALM; sequence MGGMQASMMG…NQTLSPQMWK (90 aa).

Interacts with ARF1. Interacts with PICALM and clathrin heavy chains.

The protein localises to the cytoplasm. Its function is as follows. GTPase activating protein that acts on ARF1. Can also activate ARF6 (in vitro). May play a role in clathrin-dependent retrograde transport from early endosomes to the trans-Golgi network. The sequence is that of Stromal membrane-associated protein 2 (SMAP2) from Bos taurus (Bovine).